The primary structure comprises 325 residues: Treponemal membrane protein B (325 aa).

A signal peptide spans 1–24; the sequence is MKTRNFSLVSALYVLLGVPLFVSA. The EAARKAAE repeat unit spans residues 159–166; sequence EAARKAAE. Residues 167-189 form an ARKLEEQRIAAQKAQEERKRAEE repeat; the sequence is ARKLEEQRIAAQKAQEERKRAEE. The segment at 176–224 is disordered; it reads AAQKAQEERKRAEEEAARKAAEARKLEEQRIAAQKAQEERKRAEEEAAR. The EAARKAAE repeat unit spans residues 190-197; sequence EAARKAAE. Residues 198 to 220 form an ARKLEEQRIAAQKAQEERKRAEE repeat; that stretch reads ARKLEEQRIAAQKAQEERKRAEE. Residues 221–228 form an EAARKAAE repeat; sequence EAARKAAE. The EAARKAEE repeat unit spans residues 229–236; it reads EAARKAEE.

It to T.phagedenis TmpB.

It is found in the cell outer membrane. Its function is as follows. Tmp may serve as a porin or transport protein for large molecules. The chain is Treponemal membrane protein B (tmpB) from Treponema pallidum (strain Nichols).